Reading from the N-terminus, the 419-residue chain is Gamma-glutamyl phosphate reductase (419 aa).

Belongs to the gamma-glutamyl phosphate reductase family.

The protein resides in the cytoplasm. The enzyme catalyses L-glutamate 5-semialdehyde + phosphate + NADP(+) = L-glutamyl 5-phosphate + NADPH + H(+). Its pathway is amino-acid biosynthesis; L-proline biosynthesis; L-glutamate 5-semialdehyde from L-glutamate: step 2/2. Catalyzes the NADPH-dependent reduction of L-glutamate 5-phosphate into L-glutamate 5-semialdehyde and phosphate. The product spontaneously undergoes cyclization to form 1-pyrroline-5-carboxylate. The sequence is that of Gamma-glutamyl phosphate reductase from Tolumonas auensis (strain DSM 9187 / NBRC 110442 / TA 4).